The sequence spans 332 residues: Arabinogalactan endo-beta-1,4-galactanase (332 aa).

N-linked (GlcNAc...) asparagine glycosylation occurs at Asn111. The active-site Proton donor is the Glu135. Glu245 functions as the Nucleophile in the catalytic mechanism.

This sequence belongs to the glycosyl hydrolase 53 family.

The enzyme catalyses The enzyme specifically hydrolyzes (1-&gt;4)-beta-D-galactosidic linkages in type I arabinogalactans.. This Humicola insolens (Soft-rot fungus) protein is Arabinogalactan endo-beta-1,4-galactanase.